We begin with the raw amino-acid sequence, 789 residues long: Disintegrin and metalloproteinase domain-containing protein 7 (789 aa).

Residues methionine 1–glycine 23 form the signal peptide. A propeptide spanning residues valine 24–threonine 176 is cleaved from the precursor. Residues valine 24–serine 667 are Extracellular-facing. N-linked (GlcNAc...) asparagine glycosylation is found at asparagine 84, asparagine 167, and asparagine 174. The 195-residue stretch at lysine 199–proline 393 folds into the Peptidase M12B domain. 4 disulfides stabilise this stretch: cysteine 310–cysteine 388, cysteine 350–cysteine 372, cysteine 352–cysteine 357, and cysteine 459–cysteine 479. Residues tyrosine 401–asparagine 487 enclose the Disintegrin domain. N-linked (GlcNAc...) asparagine glycans are attached at residues asparagine 583, asparagine 628, and asparagine 664. Residues valine 668–isoleucine 689 form a helical membrane-spanning segment. Over arginine 690–glycine 789 the chain is Cytoplasmic. The segment at arginine 764–glycine 789 is disordered. Positions threonine 772 to glycine 789 are enriched in polar residues.

In terms of assembly, interacts with ITM2B in sperm; the interaction increases following capacitation. Interacts with HSPA5 and CANX. As to expression, expressed in both the head and tails of sperm (at protein level). Expressed in the epididymis (at protein level). Abundantly expressed in the apical region of the proximal caput epididymal epithelium, with decreasing expression in the mid and distal caput epididymal epithelium.

Its subcellular location is the membrane. Its function is as follows. Required for normal male fertility via maintenance of epithelial cell morphology in the caput epididymis and subsequently correct epididymis lumen structure required for sperm development. Plays a role in sperm motility, flagella morphology and tyrosine phosphorylation during sperm capacitance. Plays a role in normal expression levels of HSPA5, ITM2B and ADAM2 in sperm both prior to and post-capacitation. This is a non catalytic metalloprotease-like protein. The protein is Disintegrin and metalloproteinase domain-containing protein 7 of Mus musculus (Mouse).